Here is a 236-residue protein sequence, read N- to C-terminus: Large ribosomal subunit protein uL1 (236 aa).

The protein belongs to the universal ribosomal protein uL1 family. Part of the 50S ribosomal subunit.

Binds directly to 23S rRNA. The L1 stalk is quite mobile in the ribosome, and is involved in E site tRNA release. Functionally, protein L1 is also a translational repressor protein, it controls the translation of the L11 operon by binding to its mRNA. The sequence is that of Large ribosomal subunit protein uL1 from Heliobacterium modesticaldum (strain ATCC 51547 / Ice1).